We begin with the raw amino-acid sequence, 396 residues long: MAAPIDTFLFTSESVNEGHPDKMCDQISDAVLDACLAQDPESKVACETCTKTNLVMVFGEITTKGNVDYEKIVRQTCRDIGFVSADVGLDADNCKVLVYIEQQSPDIAQGVHGHLTKRPEEIGAGDQGHMFGYATDETPELMPLSHVLATKLGARLTEVRKNGTCPWLRPDGKTQVTVEYYNDNGAMVPIRVHTVLISTQHDETVTNDEIAADLKEHVIKPVIPEKYLDEKTIFHLNPSGRFVIGGPHGDAGLTGRKIIIDTYGGWGAHGGGAFSGKDPTKVDRSGAYIARQAAKSIVASGLARRCIVQISYAIGVPEPLSVFVDTYGTGKIPDKDILKIVKETFDFRPGMIAINLDLLKGGSRYLKTAAYGHFGRDDPDFTWEVVKPLKWDKPQA.

E13 contributes to the Mg(2+) binding site. H19 serves as a coordination point for ATP. E47 is a K(+) binding site. L-methionine is bound by residues E60 and Q103. ATP-binding positions include 171–173 (DGK), 239–242 (SGRF), D250, 256–257 (RK), A273, K277, and K281. D250 serves as a coordination point for L-methionine. Residue K281 coordinates L-methionine.

Belongs to the AdoMet synthase family. As to quaternary structure, homotetramer. Mn(2+) serves as cofactor. The cofactor is Mg(2+). Requires Co(2+) as cofactor. It depends on K(+) as a cofactor.

It is found in the cytoplasm. It carries out the reaction L-methionine + ATP + H2O = S-adenosyl-L-methionine + phosphate + diphosphate. It participates in amino-acid biosynthesis; S-adenosyl-L-methionine biosynthesis; S-adenosyl-L-methionine from L-methionine: step 1/1. Functionally, catalyzes the formation of S-adenosylmethionine from methionine and ATP. The reaction comprises two steps that are both catalyzed by the same enzyme: formation of S-adenosylmethionine (AdoMet) and triphosphate, and subsequent hydrolysis of the triphosphate. May be involved in the synthesis of betain in response to abiotic stress such as high salinity. The sequence is that of S-adenosylmethionine synthase 1 (SAMS1) from Beta vulgaris (Sugar beet).